The sequence spans 147 residues: uncharacterized protein (147 aa).

It belongs to the limonene-1,2-epoxide hydrolase family.

This is an uncharacterized protein from Bacillus subtilis (strain 168).